The primary structure comprises 154 residues: Protein X (154 aa).

Residues 68 to 117 (PCALRFTSARCMATTVNAHQILPKVLHKRTLGLPAMSTTDLEAYFKDCLF) are mitochondrial targeting sequence.

The protein belongs to the orthohepadnavirus protein X family. As to quaternary structure, may form homodimer. May interact with host CEBPA, CFLAR, CREB1, DDB1, E4F1, HBXIP, HSPD1/HSP60, NFKBIA, POLR2E and SMAD4. Interacts with host SMC5-SMC6 complex and induces its degradation. Interacts with host TRPC4AP; leading to prevent ubiquitination of TRPC4AP. Interacts with host PLSCR1; this interaction promotes ubiquitination and degradation of HBx and impairs HBx-mediated cell proliferation. A fraction may be phosphorylated in insect cells and HepG2 cells, a human hepatoblastoma cell line. Phosphorylated in vitro by host protein kinase C or mitogen-activated protein kinase. N-acetylated in insect cells.

The protein resides in the host cytoplasm. It localises to the host nucleus. It is found in the host mitochondrion. In terms of biological role, multifunctional protein that plays a role in silencing host antiviral defenses and promoting viral transcription. Does not seem to be essential for HBV infection. May be directly involved in development of cirrhosis and liver cancer (hepatocellular carcinoma). Most of cytosolic activities involve modulation of cytosolic calcium. The effect on apoptosis is controversial depending on the cell types in which the studies have been conducted. May induce apoptosis by localizing in mitochondria and causing loss of mitochondrial membrane potential. May also modulate apoptosis by binding host CFLAR, a key regulator of the death-inducing signaling complex (DISC). Promotes viral transcription by using the host E3 ubiquitin ligase DDB1 to target the SMC5-SMC6 complex to proteasomal degradation. This host complex would otherwise bind to viral episomal DNA, and prevents its transcription. Moderately stimulates transcription of many different viral and cellular transcription elements. Promoters and enhancers stimulated by HBx contain DNA binding sites for NF-kappa-B, AP-1, AP-2, c-EBP, ATF/CREB, or the calcium-activated factor NF-AT. The protein is Protein X of Hepatitis B virus genotype A3 (isolate Cameroon/CMR983/1994) (HBV-A).